We begin with the raw amino-acid sequence, 217 residues long: 3,4-dihydroxy-2-butanone 4-phosphate synthase (217 aa).

Residues 37–38 (RE), D42, 150–154 (RRGHT), and E174 each bind D-ribulose 5-phosphate. E38 is a binding site for Mg(2+). H153 is a binding site for Mg(2+).

The protein belongs to the DHBP synthase family. Homodimer. Mg(2+) is required as a cofactor. Mn(2+) serves as cofactor.

The enzyme catalyses D-ribulose 5-phosphate = (2S)-2-hydroxy-3-oxobutyl phosphate + formate + H(+). It functions in the pathway cofactor biosynthesis; riboflavin biosynthesis; 2-hydroxy-3-oxobutyl phosphate from D-ribulose 5-phosphate: step 1/1. Its function is as follows. Catalyzes the conversion of D-ribulose 5-phosphate to formate and 3,4-dihydroxy-2-butanone 4-phosphate. In Shewanella putrefaciens (strain CN-32 / ATCC BAA-453), this protein is 3,4-dihydroxy-2-butanone 4-phosphate synthase.